The following is a 462-amino-acid chain: Ubiquitin carboxyl-terminal hydrolase calypso (462 aa).

The UCH catalytic domain maps to 29-260 (GWLELESDPG…IRFNLMAVVP (232 aa)). Cys115 acts as the Nucleophile in catalysis. Catalysis depends on His197, which acts as the Proton donor. The ULD domain occupies 357–385 (NYDKFICTFLSMLAHQGVLGELVSQHLLP). Residues 387–462 (KKIANRLNRQ…KGRNKCRKRK (76 aa)) are positively charged C-terminal tail required for binding nucleosomes. The span at 413 to 447 (GTNAAGSKSQQQQQQTQQQPQQTQTAKNGKSPGKT) shows a compositional bias: low complexity. The disordered stretch occupies residues 413–462 (GTNAAGSKSQQQQQQTQQQPQQTQTAKNGKSPGKTPGRRRKGRNKCRKRK). The segment covering 448 to 462 (PGRRRKGRNKCRKRK) has biased composition (basic residues).

This sequence belongs to the peptidase C12 family. BAP1 subfamily. In terms of assembly, catalytic component of the polycomb repressive deubiquitinase (PR-DUB) complex, at least composed of caly/calypso, Asx and sba (MBD5/6 homolog). The PR-DUB complex associates with nucleosomes to mediate deubiquitination of histone H2AK118ub1 substrates; the association requires the positively charged C-terminal tail of caly, probably due to direct binding of DNA. Interacts (via ULD domain) with Asx (via DEUBAD domain); the interaction produces a stable heterodimer with a composite binding site for ubiquitin. Homodimerizes (via coiled-coil hinge-region between the UCH and ULD domains) to mediate assembly of 2 copies of the caly-Asx heterodimer into a bisymmetric tetramer; dimerization enhances PR-DUB association with nucleosomes.

It localises to the nucleus. It carries out the reaction Thiol-dependent hydrolysis of ester, thioester, amide, peptide and isopeptide bonds formed by the C-terminal Gly of ubiquitin (a 76-residue protein attached to proteins as an intracellular targeting signal).. Functionally, catalytic component of the polycomb repressive deubiquitinase (PR-DUB) complex, a complex that specifically mediates deubiquitination of histone H2A monoubiquitinated at 'Lys-119' (H2AK118ub1). Mediates bisymmetric organization of the PR-DUB complex and is involved in association with nucleosomes to mediate deubiquitination. Does not deubiquitinate monoubiquitinated histone H2B. Required to maintain the transcriptionally repressive state of homeotic genes throughout development. The PR-DUB complex has weak or no activity toward 'Lys-48'- and 'Lys-63'-linked polyubiquitin chains. Polycomb group (PcG) protein. The chain is Ubiquitin carboxyl-terminal hydrolase calypso from Drosophila grimshawi (Hawaiian fruit fly).